The sequence spans 121 residues: Putative inactive aspartokinase 3 HI_1632 (121 aa).

This sequence belongs to the aspartokinase family.

The sequence is that of Putative inactive aspartokinase 3 HI_1632 from Haemophilus influenzae (strain ATCC 51907 / DSM 11121 / KW20 / Rd).